A 467-amino-acid polypeptide reads, in one-letter code: Hydroxyacid-oxoacid transhydrogenase, mitochondrial (467 aa).

Position 445 is an N6-acetyllysine (Lys-445). Ser-452 carries the post-translational modification Phosphoserine.

This sequence belongs to the iron-containing alcohol dehydrogenase family. Hydroxyacid-oxoacid transhydrogenase subfamily. Only expressed in adult liver.

It is found in the mitochondrion. The catalysed reaction is (S)-3-hydroxybutanoate + 2-oxoglutarate = (R)-2-hydroxyglutarate + acetoacetate. It carries out the reaction 4-hydroxybutanoate + 2-oxoglutarate = (R)-2-hydroxyglutarate + succinate semialdehyde. In terms of biological role, catalyzes the cofactor-independent reversible oxidation of gamma-hydroxybutyrate (GHB) to succinic semialdehyde (SSA) coupled to reduction of 2-ketoglutarate (2-KG) to D-2-hydroxyglutarate (D-2-HG). D,L-3-hydroxyisobutyrate and L-3-hydroxybutyrate (L-3-OHB) are also substrates for HOT with 10-fold lower activities. The protein is Hydroxyacid-oxoacid transhydrogenase, mitochondrial (ADHFE1) of Homo sapiens (Human).